We begin with the raw amino-acid sequence, 126 residues long: Glycine cleavage system H protein (126 aa).

The Lipoyl-binding domain occupies 20–102 (IGTIGITDYA…LGDGWFFKVR (83 aa)). An N6-lipoyllysine modification is found at K61.

This sequence belongs to the GcvH family. The glycine cleavage system is composed of four proteins: P, T, L and H. It depends on (R)-lipoate as a cofactor.

In terms of biological role, the glycine cleavage system catalyzes the degradation of glycine. The H protein shuttles the methylamine group of glycine from the P protein to the T protein. The chain is Glycine cleavage system H protein from Rhodospirillum rubrum (strain ATCC 11170 / ATH 1.1.1 / DSM 467 / LMG 4362 / NCIMB 8255 / S1).